A 324-amino-acid polypeptide reads, in one-letter code: tRNA(Ile)-lysidine synthase (324 aa).

Position 33–38 (33–38 (SGGPDS)) interacts with ATP.

Belongs to the tRNA(Ile)-lysidine synthase family.

It is found in the cytoplasm. It catalyses the reaction cytidine(34) in tRNA(Ile2) + L-lysine + ATP = lysidine(34) in tRNA(Ile2) + AMP + diphosphate + H(+). In terms of biological role, ligates lysine onto the cytidine present at position 34 of the AUA codon-specific tRNA(Ile) that contains the anticodon CAU, in an ATP-dependent manner. Cytidine is converted to lysidine, thus changing the amino acid specificity of the tRNA from methionine to isoleucine. The protein is tRNA(Ile)-lysidine synthase of Thermobifida fusca (strain YX).